A 302-amino-acid polypeptide reads, in one-letter code: Aspartate carbamoyltransferase catalytic subunit (302 aa).

R53 and T54 together coordinate carbamoyl phosphate. Residue K82 participates in L-aspartate binding. Carbamoyl phosphate is bound by residues R103, H131, and Q134. 2 residues coordinate L-aspartate: R164 and R223. 2 residues coordinate carbamoyl phosphate: L260 and P261.

Belongs to the aspartate/ornithine carbamoyltransferase superfamily. ATCase family. As to quaternary structure, heterooligomer of catalytic and regulatory chains.

The enzyme catalyses carbamoyl phosphate + L-aspartate = N-carbamoyl-L-aspartate + phosphate + H(+). The protein operates within pyrimidine metabolism; UMP biosynthesis via de novo pathway; (S)-dihydroorotate from bicarbonate: step 2/3. Functionally, catalyzes the condensation of carbamoyl phosphate and aspartate to form carbamoyl aspartate and inorganic phosphate, the committed step in the de novo pyrimidine nucleotide biosynthesis pathway. This Methanococcus maripaludis (strain DSM 14266 / JCM 13030 / NBRC 101832 / S2 / LL) protein is Aspartate carbamoyltransferase catalytic subunit.